Consider the following 307-residue polypeptide: Agmatinase (307 aa).

Positions 128, 151, 153, 155, 232, and 234 each coordinate Mn(2+).

The protein belongs to the arginase family. Agmatinase subfamily. The cofactor is Mn(2+).

The catalysed reaction is agmatine + H2O = urea + putrescine. The protein operates within amine and polyamine biosynthesis; putrescine biosynthesis via agmatine pathway; putrescine from agmatine: step 1/1. In terms of biological role, catalyzes the formation of putrescine from agmatine. The protein is Agmatinase of Neisseria gonorrhoeae (strain ATCC 700825 / FA 1090).